The primary structure comprises 154 residues: Transcriptional repressor NrdR (154 aa).

Residues 1–22 (MECPNCHKNASRVIDSRPSDEN) are disordered. The segment at 3–34 (CPNCHKNASRVIDSRPSDENRAIRRRRECENC) is a zinc-finger region. An ATP-cone domain is found at 49-139 (LLVIKNDGTR…IYRQFKDVSG (91 aa)).

The protein belongs to the NrdR family. Zn(2+) is required as a cofactor.

Its function is as follows. Negatively regulates transcription of bacterial ribonucleotide reductase nrd genes and operons by binding to NrdR-boxes. In Lactobacillus gasseri (strain ATCC 33323 / DSM 20243 / BCRC 14619 / CIP 102991 / JCM 1131 / KCTC 3163 / NCIMB 11718 / NCTC 13722 / AM63), this protein is Transcriptional repressor NrdR.